Here is a 335-residue protein sequence, read N- to C-terminus: Heme A synthase (335 aa).

8 consecutive transmembrane segments (helical) span residues 9–29, 90–110, 120–140, 156–176, 197–217, 255–275, 283–303, and 309–329; these read VAIW…IGGF, YVHR…FIYF, VVIR…TGWY, MLTL…YQFF, VGII…VAGL, VQFI…VLTI, VYVM…TLLL, and IAIS…CFLC. His259 contacts heme. His313 lines the heme pocket.

This sequence belongs to the COX15/CtaA family. Type 2 subfamily. As to quaternary structure, interacts with CtaB. Heme b serves as cofactor.

It localises to the cell membrane. The catalysed reaction is Fe(II)-heme o + 2 A + H2O = Fe(II)-heme a + 2 AH2. It functions in the pathway porphyrin-containing compound metabolism; heme A biosynthesis; heme A from heme O: step 1/1. Catalyzes the conversion of heme O to heme A by two successive hydroxylations of the methyl group at C8. The first hydroxylation forms heme I, the second hydroxylation results in an unstable dihydroxymethyl group, which spontaneously dehydrates, resulting in the formyl group of heme A. The chain is Heme A synthase from Wolbachia sp. subsp. Brugia malayi (strain TRS).